Consider the following 66-residue polypeptide: Large ribosomal subunit protein bL31 (66 aa).

Zn(2+) contacts are provided by Cys-16, Cys-18, Cys-36, and Cys-39.

The protein belongs to the bacterial ribosomal protein bL31 family. Type A subfamily. Part of the 50S ribosomal subunit. The cofactor is Zn(2+).

Its function is as follows. Binds the 23S rRNA. The chain is Large ribosomal subunit protein bL31 from Anoxybacillus flavithermus (strain DSM 21510 / WK1).